A 622-amino-acid polypeptide reads, in one-letter code: Signal recognition particle subunit SRP68 (622 aa).

The segment at 576-622 is disordered; sequence RDATPKKAAKGSSAAAASSKTSNQEEEEQQGLTGMLSGWKKSFWGNK. Residues 585-595 show a composition bias toward low complexity; that stretch reads KGSSAAAASSK.

Belongs to the SRP68 family. In terms of assembly, heterodimer with srpa-72. Srpa-68/srpa-72 heterodimer formation is stabilized by the presence of 7SL RNA. Component of a signal recognition particle (SRP) complex that consists of a 7SL RNA molecule of 300 nucleotides and six protein subunits: srpa-72, srpa-68, SRP54, F37F2.2/SRP19, F25G6.8/SRP14 and ZK512.4/SRP9. Within the SRP complex, interacts (via C-terminus) with srpa-72 (via N-terminus).

The protein resides in the cytoplasm. It localises to the nucleus. It is found in the nucleolus. Its subcellular location is the endoplasmic reticulum. Its function is as follows. Component of the signal recognition particle (SRP) complex, a ribonucleoprotein complex that mediates the cotranslational targeting of secretory and membrane proteins to the endoplasmic reticulum (ER). The SRP complex interacts with the signal sequence in nascent secretory and membrane proteins and directs them to the membrane of the ER. The SRP complex targets the ribosome-nascent chain complex to the SRP receptor (SR), which is anchored in the ER, where SR compaction and GTPase rearrangement drive cotranslational protein translocation into the ER. Binds the signal recognition particle RNA (7SL RNA), srpa-72 binds to this complex subsequently. The SRP complex possibly participates in the elongation arrest function. In Caenorhabditis elegans, this protein is Signal recognition particle subunit SRP68.